Consider the following 51-residue polypeptide: MPSHKTFQIKKKLAKKMRQNRPIPYWIRMRTDNTIRYNAKRRHWRRTKLGF.

Belongs to the eukaryotic ribosomal protein eL39 family.

This is Large ribosomal subunit protein eL39x (RPL39C) from Oryza sativa subsp. japonica (Rice).